The sequence spans 241 residues: Terpene cyclase olcD (241 aa).

The next 7 helical transmembrane spans lie at 19–39 (LSDI…FATI), 49–71 (WMPL…LYPP), 76–95 (ILGF…LRFA), 108–128 (YLPV…LALI), 137–157 (FYYG…SGLV), 166–186 (SYTI…GLFF), and 202–222 (LMRW…VQFW).

Belongs to the paxB family.

It localises to the membrane. It functions in the pathway secondary metabolite biosynthesis; terpenoid biosynthesis. Its function is as follows. Terpene cyclase; part of the gene cluster that mediates the biosynthesis of 15-deoxyoxalicine B. The first step of the pathway is the synthesis of nicotinyl-CoA from nicotinic acid by the nicotinic acid-CoA ligase olcI. Nicotinyl-CoA is then a substrate of polyketide synthase olcA to produce 4-hydroxy-6-(3-pyridinyl)-2H-pyran-2-one (HPPO) which is further prenylated by the polyprenyl transferase olcH to yield geranylgeranyl-HPPO. Geranylgeranyl pyrophosphate is provided by the cluster-specific geranylgeranyl pyrophosphate synthase olcC. The FAD-dependent monooxygenase olcE catalyzes the epoxidation of geranylgeranyl-HPPO and the terpene cyclase olcD catalyzes the cyclization of the terpenoid component, resulting in the formation of the tricyclic terpene moiety seen in predecaturin E. The cytochrome P450 monooxygenase then catalyzes the allylic oxidation of predecaturin E, which is followed by spirocylization with concomitant loss of one molecule of water to form decaturin E. Decaturin E is the substrate of the cytochrome P450 monooxygenase olcJ which hydroxylates it at the C-29 position to form decaturin F. The short-chain dehydrogenase/reductase olcF may catalyze the oxidation of decaturin F to generate the 29-hydroxyl-27-one intermediate, and subsequent hemiacetal formation probably leads to the formation of decaturin C. The dioxygenase olcK may be a peroxisomal enzyme that catalyzes the hydroxylation of decaturin C into decaturin A once decaturin C is shuttled into the peroxisome by the MFS transporter olcL. Finally the cytochrome P450 monooxygenase olcB catalyzes the oxidative rearrangement to yield 15-deoxyoxalicine B. In the absence of olcJ, decaturin E may be shunted to a pathway in which it is oxidized to a ketone, possibly by olcF, to form decaturin D, which undergoes further allylic oxidation to yield decaturin G. Moreover, in the absence of oclK or oclL, oclB can convert decaturin C into 15-deoxyoxalicine A. The sequence is that of Terpene cyclase olcD from Penicillium canescens.